The chain runs to 515 residues: MIGVISTAYFTMKDKHSIKTVKKYWWKNCVIQHVKYHGKTFIIATVGYGKANAAMTITYLLEKYPGLQTILNVDLALSTNDKHDTGDTTISTKFIYRDADLTVFKDIKYGQIVNEPESFQFDGEFAKVVKDFKLGLTEGVTGTADMLIYNSKQFKEMVDKYGHTIDVIDTEAGAIAQVAKKSSINYIALKIIYNNALSPWDNDPIHKFKMYETVNTLKYLLRRLFNLLSSNYIIDLSQCSQDDLDSINELFEIKHDQWIKLFKPNTHKVLSGFGPSLMLVDKQEKTPVALDIIQVIRSKTKEAEGPSKVILGEDEWKNAPKKWLRKLLFLEQVRVNDDELLWNKSAKYDLNNEKLYKIETVETVANEIAAAIAEKCQDKSSYTYNGATVPEKYLLVNCDARISFYITHNQSHEFVEDKNFGTQLVSNEFLKYLNEALKDVDSPYQQIVIYMTIPALDYRKISVFIPSNKGANRGVKFVALNQKLQRDYTVVDITRNDYDPIKVGSFKVTIRLKSE.

A Blocked amino end (Met) modification is found at Met1. 4 helical regions span residues Val21–Val34, His206–Leu228, Lys357–Cys376, and Ser426–Val440.

Its subcellular location is the cytoplasm. The protein resides in the cytoskeleton. Its function is as follows. Acts as a cytoskeletal structure involved in the shape and motility of spiroplasmas. The chain is Fibril protein from Spiroplasma citri.